The chain runs to 289 residues: DDRGK domain-containing protein 1 (289 aa).

The Lumenal segment spans residues 1–2 (MD). The chain crosses the membrane as a helical span at residues 3–23 (PFILAAIISGIVIIILSIAFL). Residues 24 to 289 (RVSQVKPQAA…LINLAPVTVP (266 aa)) lie on the Cytoplasmic side of the membrane. The interval 65–168 (RHQAALEEEP…DERKKREQEE (104 aa)) is disordered. A compositionally biased stretch (acidic residues) spans 70-85 (LEEEPEIQEEADEGAP). The span at 87–166 (IDQKIDFDDK…AEDERKKREQ (80 aa)) shows a compositional bias: basic and acidic residues.

The protein belongs to the DDRGK1 family. As to quaternary structure, interacts with Atg9; the interaction is transient.

Its subcellular location is the endoplasmic reticulum membrane. In terms of biological role, substrate adapter for ufmylation, the covalent attachment of the ubiquitin-like modifier UFM1 to substrate proteins. Required for ufmylation of Atg9; protects the nervous system during aging, possibly by stabilizing Atg9 and supporting its function. This is DDRGK domain-containing protein 1 from Bombyx mori (Silk moth).